The chain runs to 286 residues: MRYFRLCIISLLATLPLRVHAGPQPLEQIKLSESQLSGSVGMIEMDLARPGTLTAWRADERFPMMSTFKVVLCGAGLARVDAGDEQLERKIHYRRQDLVDYSPVSEKHLADGMTVGELCAAAITMSDNSAANLLLPAVGGPAGLTAFLRQIGDNVTRLDRWETELNEALPGDARDTTTARSMAATLRKLLTSQRLSARSQRQLLQWMVDDRVAGRLIRSVLPAGWFIADKTGAGERGARGIVALLGPNNKAERIVVIYLRDTPASMAERNQQIAGIAGALIEHWQR.

The N-terminal stretch at 1–21 (MRYFRLCIISLLATLPLRVHA) is a signal peptide. Catalysis depends on S66, which acts as the Acyl-ester intermediate. C73 and C119 are joined by a disulfide. E164 serves as the catalytic Proton acceptor. 230 to 232 (KTG) lines the substrate pocket.

This sequence belongs to the class-A beta-lactamase family.

The catalysed reaction is a beta-lactam + H2O = a substituted beta-amino acid. In Enterobacter cloacae, this protein is Beta-lactamase Ohio-1.